The primary structure comprises 254 residues: Small ribosomal subunit protein mS40 (254 aa).

Residues 1–33 (MAAPLRHTLLKLVPTLLRSSYVAQVPLQTLCTR) constitute a mitochondrion transit peptide. Ser-47 is modified (phosphoserine). Residues 218-254 (YQGNLLEESGPPPESMPEMPTTPPAESSIEQPGSQSA) are disordered. Pro residues predominate over residues 227–240 (GPPPESMPEMPTTP).

The protein belongs to the bacterial ribosomal protein bS18 family. Mitochondrion-specific ribosomal protein mS40 subfamily. As to quaternary structure, component of the mitochondrial ribosome small subunit (28S) which comprises a 12S rRNA and about 30 distinct proteins.

It localises to the mitochondrion. The sequence is that of Small ribosomal subunit protein mS40 (Mrps18b) from Mus musculus (Mouse).